We begin with the raw amino-acid sequence, 449 residues long: Asparagine--tRNA ligase (449 aa).

The protein belongs to the class-II aminoacyl-tRNA synthetase family. In terms of assembly, homodimer.

The protein localises to the cytoplasm. It catalyses the reaction tRNA(Asn) + L-asparagine + ATP = L-asparaginyl-tRNA(Asn) + AMP + diphosphate + H(+). This chain is Asparagine--tRNA ligase, found in Deinococcus geothermalis (strain DSM 11300 / CIP 105573 / AG-3a).